Here is a 904-residue protein sequence, read N- to C-terminus: Dual specificity tyrosine-phosphorylation-regulated kinase mbk-1 (904 aa).

Disordered regions lie at residues 1 to 151, 250 to 272, and 285 to 345; these read MNSG…MPPE, TVGR…ASSS, and AVPN…YNNG. Residues 9–23 are compositionally biased toward polar residues; it reads NLQAWGQQPSSSYSN. The segment covering 24–35 has biased composition (low complexity); the sequence is TQQQHGQITGQI. The segment covering 59–75 has biased composition (basic and acidic residues); that stretch reads ELEKSKKIAEQPTEHPQ. A compositionally biased stretch (low complexity) spans 112–123; the sequence is NNSNSQNFFPQQ. Over residues 286–297 the composition is skewed to polar residues; sequence VPNTSSSGNQPH. The Protein kinase domain occupies 367-690; that stretch reads ILSDTPVGKG…TLFPVSHTAY (324 aa). Residues 373–381 and Lys-396 contribute to the ATP site; that span reads VGKGSFGQV. The Proton acceptor role is filled by Asp-495. 2 disordered regions span residues 717–830 and 881–904; these read YRPV…DQAE and MSHG…NNKL. A compositionally biased stretch (polar residues) spans 721–733; that stretch reads PTSSHPISVTSSF. Positions 749–820 are enriched in low complexity; that stretch reads SQQNYHNPNY…VQQHSSSSSR (72 aa). Over residues 881–890 the composition is skewed to polar residues; it reads MSHGNVNAGS. A compositionally biased stretch (basic and acidic residues) spans 892–904; the sequence is RDMEKHDYPNNKL.

It belongs to the protein kinase superfamily. CMGC Ser/Thr protein kinase family. MNB/DYRK subfamily. The cofactor is Mg(2+).

It localises to the nucleus. It carries out the reaction L-seryl-[protein] + ATP = O-phospho-L-seryl-[protein] + ADP + H(+). It catalyses the reaction L-threonyl-[protein] + ATP = O-phospho-L-threonyl-[protein] + ADP + H(+). The enzyme catalyses L-tyrosyl-[protein] + ATP = O-phospho-L-tyrosyl-[protein] + ADP + H(+). Possible role in the function of olfactory neurons. The sequence is that of Dual specificity tyrosine-phosphorylation-regulated kinase mbk-1 from Caenorhabditis briggsae.